Reading from the N-terminus, the 416-residue chain is Gamma-glutamyl phosphate reductase (416 aa).

It belongs to the gamma-glutamyl phosphate reductase family.

It is found in the cytoplasm. It catalyses the reaction L-glutamate 5-semialdehyde + phosphate + NADP(+) = L-glutamyl 5-phosphate + NADPH + H(+). It participates in amino-acid biosynthesis; L-proline biosynthesis; L-glutamate 5-semialdehyde from L-glutamate: step 2/2. Functionally, catalyzes the NADPH-dependent reduction of L-glutamate 5-phosphate into L-glutamate 5-semialdehyde and phosphate. The product spontaneously undergoes cyclization to form 1-pyrroline-5-carboxylate. This Actinobacillus succinogenes (strain ATCC 55618 / DSM 22257 / CCUG 43843 / 130Z) protein is Gamma-glutamyl phosphate reductase.